Here is a 918-residue protein sequence, read N- to C-terminus: Chaperone protein ClpC1, chloroplastic (918 aa).

The region spanning 88–230 (FERFTEKAIK…RTQVIRMVGE (143 aa)) is the Clp R domain. Repeat regions lie at residues 91-156 (FTEK…IGRG) and 166-230 (FTPR…MVGE). The interval 251 to 498 (LEEYGTNLTK…RVRLRHAQLP (248 aa)) is i. 296 to 303 (GEPGVGKT) serves as a coordination point for ATP. One can recognise a UVR domain in the interval 505 to 540 (DKELRQVTKDKNEAVRGQDFEKAGELRDREMELKAQ). The interval 565–756 (VTEADIQHIV…LLIMTSNVGS (192 aa)) is II. 639 to 646 (GPTGVGKS) serves as a coordination point for ATP.

This sequence belongs to the ClpA/ClpB family. ClpC subfamily. As to expression, widely expressed.

Its subcellular location is the plastid. It localises to the chloroplast. Functionally, molecular chaperone that may interact with a ClpP-like protease involved in degradation of denatured proteins in the chloroplast. This is Chaperone protein ClpC1, chloroplastic (CLPC1) from Oryza sativa subsp. japonica (Rice).